A 335-amino-acid chain; its full sequence is Phosphatidate cytidylyltransferase, mitochondrial (335 aa).

Belongs to the TAM41 family. Requires Mg(2+) as cofactor.

It localises to the mitochondrion inner membrane. It catalyses the reaction a 1,2-diacyl-sn-glycero-3-phosphate + CTP + H(+) = a CDP-1,2-diacyl-sn-glycerol + diphosphate. The protein operates within phospholipid metabolism; CDP-diacylglycerol biosynthesis; CDP-diacylglycerol from sn-glycerol 3-phosphate: step 3/3. Its function is as follows. Catalyzes the conversion of phosphatidic acid (PA) to CDP-diacylglycerol (CDP-DAG), an essential intermediate in the synthesis of phosphatidylglycerol, cardiolipin and phosphatidylinositol. The chain is Phosphatidate cytidylyltransferase, mitochondrial (TAMM41) from Bos taurus (Bovine).